The chain runs to 429 residues: Phosphoribosylamine--glycine ligase (429 aa).

Residues 109 to 316 (KDFLARHQIP…LVDLCLAACD (208 aa)) form the ATP-grasp domain. 135-196 (LREKGAPIVI…EEFLDGEEAS (62 aa)) is a binding site for ATP. Mg(2+)-binding residues include Glu286 and Asn288.

This sequence belongs to the GARS family. In terms of assembly, monomer. It depends on Mg(2+) as a cofactor. The cofactor is Mn(2+).

The enzyme catalyses 5-phospho-beta-D-ribosylamine + glycine + ATP = N(1)-(5-phospho-beta-D-ribosyl)glycinamide + ADP + phosphate + H(+). It functions in the pathway purine metabolism; IMP biosynthesis via de novo pathway; N(1)-(5-phospho-D-ribosyl)glycinamide from 5-phospho-alpha-D-ribose 1-diphosphate: step 2/2. This is Phosphoribosylamine--glycine ligase from Salmonella typhi.